A 99-amino-acid polypeptide reads, in one-letter code: uncharacterized protein (99 aa).

This is an uncharacterized protein from Dictyostelium discoideum (Social amoeba).